Reading from the N-terminus, the 159-residue chain is Ribonuclease H (159 aa).

An RNase H type-1 domain is found at 1–142 (MHKQVEIFTD…CDELAKAAAQ (142 aa)). Positions 10, 48, 70, and 134 each coordinate Mg(2+). Positions 135 to 159 (ELAKAAAQSPTKEDTGYLESQQDKT) are disordered. Basic and acidic residues predominate over residues 145 to 159 (TKEDTGYLESQQDKT).

It belongs to the RNase H family. Monomer. The cofactor is Mg(2+).

The protein resides in the cytoplasm. It catalyses the reaction Endonucleolytic cleavage to 5'-phosphomonoester.. Endonuclease that specifically degrades the RNA of RNA-DNA hybrids. The chain is Ribonuclease H from Proteus mirabilis (strain HI4320).